The primary structure comprises 294 residues: GTPase Era (294 aa).

The Era-type G domain occupies 3-170 (KSGFISIIGR…LELMIKYMPE (168 aa)). Positions 11–18 (GRPNVGKS) are G1. 11-18 (GRPNVGKS) contacts GTP. Positions 37–41 (QTTRN) are G2. The interval 58-61 (DTPG) is G3. GTP contacts are provided by residues 58–62 (DTPGI) and 120–123 (NKID). The G4 stretch occupies residues 120–123 (NKID). The G5 stretch occupies residues 149–151 (ISA). In terms of domain architecture, KH type-2 spans 201-278 (LSEEVPHGIA…NLKVWVKVKK (78 aa)).

It belongs to the TRAFAC class TrmE-Era-EngA-EngB-Septin-like GTPase superfamily. Era GTPase family. In terms of assembly, monomer.

The protein resides in the cytoplasm. It localises to the cell membrane. Its function is as follows. An essential GTPase that binds both GDP and GTP, with rapid nucleotide exchange. Plays a role in 16S rRNA processing and 30S ribosomal subunit biogenesis and possibly also in cell cycle regulation and energy metabolism. This is GTPase Era from Clostridium novyi (strain NT).